We begin with the raw amino-acid sequence, 313 residues long: tRNA dimethylallyltransferase (313 aa).

11-18 (GPTACGKT) contacts ATP. 13 to 18 (TACGKT) contacts substrate. Interaction with substrate tRNA stretches follow at residues 36 to 39 (DSAL), 160 to 164 (QRIER), and 243 to 248 (RCVGYR).

This sequence belongs to the IPP transferase family. As to quaternary structure, monomer. The cofactor is Mg(2+).

It carries out the reaction adenosine(37) in tRNA + dimethylallyl diphosphate = N(6)-dimethylallyladenosine(37) in tRNA + diphosphate. Catalyzes the transfer of a dimethylallyl group onto the adenine at position 37 in tRNAs that read codons beginning with uridine, leading to the formation of N6-(dimethylallyl)adenosine (i(6)A). The chain is tRNA dimethylallyltransferase from Neisseria meningitidis serogroup C (strain 053442).